The sequence spans 309 residues: MDSKEVLVHVKNLEKNKSNDAAVLEILHVLDKEFVPTEKLLRETKVGVEVNKFKKSTNVEISKLVKKMISSWKDAINKNKRSRQAQQHHQDHAPGNAEDKTTVGESVNGVQQPASSQSDAMKQDKYVSTKPRNSKNDGVDTAIYHHKLRDQVLKALYDVLAKESEHPPQSILHTAKAIESEMNKVNNCDTNEAAYKARYRIIYSNVISKNNPDLKHKIANGDITPEFLATCDAKDLAPAPLKQKIEEIAKQNLYNAQGATIERSVTDRFTCGKCKEKKVSYYQLQTRSADEPLTTFCTCEACGNRWKFS.

One can recognise a TFIIS N-terminal domain in the interval 5–79; the sequence is EVLVHVKNLE…SSWKDAINKN (75 aa). The interval 78 to 142 is disordered; sequence KNKRSRQAQQ…NSKNDGVDTA (65 aa). Positions 88–102 are enriched in basic and acidic residues; it reads HHQDHAPGNAEDKTT. The segment covering 103–120 has biased composition (polar residues); that stretch reads VGESVNGVQQPASSQSDA. Serine 116 bears the Phosphoserine mark. The TFIIS central domain maps to 148 to 264; it reads LRDQVLKALY…NAQGATIERS (117 aa). The TFIIS-type zinc-finger motif lies at 267–307; sequence DRFTCGKCKEKKVSYYQLQTRSADEPLTTFCTCEACGNRWK. Zn(2+)-binding residues include cysteine 271, cysteine 274, cysteine 299, and cysteine 302.

It belongs to the TFS-II family.

It localises to the nucleus. Necessary for efficient RNA polymerase II transcription elongation past template-encoded arresting sites. The arresting sites in DNA have the property of trapping a certain fraction of elongating RNA polymerases that pass through, resulting in locked ternary complexes. Cleavage of the nascent transcript by S-II allows the resumption of elongation from the new 3'-terminus. Functionally, can promote the transfer of one strand of a double-stranded DNA molecule to a homologous single strand and thus may be involved in recombination. In Saccharomyces cerevisiae (strain ATCC 204508 / S288c) (Baker's yeast), this protein is Transcription elongation factor S-II (DST1).